The sequence spans 401 residues: L-rhamnonate dehydratase (401 aa).

Residues His29 and Arg55 each coordinate substrate. Asp222, Glu248, and Glu276 together coordinate Mg(2+). His325 acts as the Proton acceptor in catalysis. Residue Glu345 coordinates substrate.

The protein belongs to the mandelate racemase/muconate lactonizing enzyme family. RhamD subfamily. As to quaternary structure, homooctamer; tetramer of dimers. Mg(2+) serves as cofactor.

It catalyses the reaction L-rhamnonate = 2-dehydro-3-deoxy-L-rhamnonate + H2O. Catalyzes the dehydration of L-rhamnonate to 2-keto-3-deoxy-L-rhamnonate (KDR). This is L-rhamnonate dehydratase from Escherichia coli O157:H7.